A 126-amino-acid polypeptide reads, in one-letter code: Histone H2B type 1-P (126 aa).

The tract at residues 1 to 36 (MPEPVKSVPAPKKGSKKAVTKAQKKDGKKRKRSRKE) is disordered. At P2 the chain carries N-acetylproline. E3 carries the ADP-ribosyl glutamic acid modification. Position 6 is an N6-(2-hydroxyisobutyryl)lysine; alternate (K6). Residue K6 is modified to N6-(beta-hydroxybutyryl)lysine; alternate. K6 is modified (N6-acetyllysine; alternate). K6 is subject to N6-butyryllysine; alternate. K6 is modified (N6-crotonyllysine; alternate). N6-lactoyllysine; alternate is present on K6. A Glycyl lysine isopeptide (Lys-Gly) (interchain with G-Cter in SUMO2); alternate cross-link involves residue K6. ADP-ribosylserine is present on S7. K12 carries the post-translational modification N6-(beta-hydroxybutyryl)lysine; alternate. N6-acetyllysine; alternate occurs at positions 12 and 13. An N6-crotonyllysine; alternate mark is found at K12 and K13. K12 bears the N6-lactoyllysine; alternate mark. At K13 the chain carries N6-(2-hydroxyisobutyryl)lysine; alternate. S15 is modified (phosphoserine; by STK4/MST1). Residues K16, K17, K21, and K24 each carry the N6-acetyllysine; alternate modification. N6-crotonyllysine; alternate is present on residues K16, K17, K21, and K24. An N6-lactoyllysine; alternate mark is found at K16, K17, K21, and K24. At K17 the chain carries N6-glutaryllysine; alternate. 2 positions are modified to N6-(2-hydroxyisobutyryl)lysine; alternate: K21 and K24. K21 is modified (N6-(beta-hydroxybutyryl)lysine; alternate). K21 is subject to N6-butyryllysine; alternate. A Glycyl lysine isopeptide (Lys-Gly) (interchain with G-Cter in SUMO2); alternate cross-link involves residue K21. Residue K25 is modified to N6-(2-hydroxyisobutyryl)lysine. K35 carries the post-translational modification N6-(2-hydroxyisobutyryl)lysine; alternate. Residue K35 is modified to N6-(beta-hydroxybutyryl)lysine; alternate. At K35 the chain carries N6-crotonyllysine; alternate. Residue K35 is modified to N6-glutaryllysine; alternate. An N6-succinyllysine; alternate modification is found at K35. K35 participates in a covalent cross-link: Glycyl lysine isopeptide (Lys-Gly) (interchain with G-Cter in ubiquitin); alternate. E36 carries the post-translational modification PolyADP-ribosyl glutamic acid. Phosphoserine; by AMPK is present on S37. An N6-(2-hydroxyisobutyryl)lysine; alternate mark is found at K44, K47, and K58. At K44 the chain carries N6-lactoyllysine; alternate. K44 and K47 each carry N6-glutaryllysine; alternate. At K47 the chain carries N6-methyllysine; alternate. At K58 the chain carries N6,N6-dimethyllysine; alternate. R80 carries the dimethylated arginine modification. K86 carries the N6-(2-hydroxyisobutyryl)lysine; alternate modification. At K86 the chain carries N6-acetyllysine; alternate. An N6-lactoyllysine; alternate modification is found at K86. K86 is subject to N6,N6,N6-trimethyllysine; alternate. 2 positions are modified to omega-N-methylarginine: R87 and R93. At K109 the chain carries N6-(2-hydroxyisobutyryl)lysine; alternate. K109 bears the N6-(beta-hydroxybutyryl)lysine; alternate mark. N6-lactoyllysine; alternate is present on K109. Residue K109 is modified to N6-glutaryllysine; alternate. Residue K109 is modified to N6-methyllysine; alternate. The O-linked (GlcNAc) serine glycan is linked to S113. T116 carries the post-translational modification Phosphothreonine. An N6-(2-hydroxyisobutyryl)lysine; alternate mark is found at K117 and K121. K117 is subject to N6-(beta-hydroxybutyryl)lysine; alternate. N6-lactoyllysine; alternate is present on residues K117 and K121. 2 positions are modified to N6-glutaryllysine; alternate: K117 and K121. N6-succinyllysine; alternate occurs at positions 117 and 121. Residue K117 is modified to N6-methylated lysine; alternate. A Glycyl lysine isopeptide (Lys-Gly) (interchain with G-Cter in ubiquitin); alternate cross-link involves residue K121.

The protein belongs to the histone H2B family. As to quaternary structure, the nucleosome is a histone octamer containing two molecules each of H2A, H2B, H3 and H4 assembled in one H3-H4 heterotetramer and two H2A-H2B heterodimers. The octamer wraps approximately 147 bp of DNA. Monoubiquitination at Lys-35 (H2BK34Ub) by the MSL1/MSL2 dimer is required for histone H3 'Lys-4' (H3K4me) and 'Lys-79' (H3K79me) methylation and transcription activation at specific gene loci, such as HOXA9 and MEIS1 loci. Similarly, monoubiquitination at Lys-121 (H2BK120Ub) by the RNF20/40 complex gives a specific tag for epigenetic transcriptional activation and is also prerequisite for histone H3 'Lys-4' and 'Lys-79' methylation. It also functions cooperatively with the FACT dimer to stimulate elongation by RNA polymerase II. H2BK120Ub also acts as a regulator of mRNA splicing: deubiquitination by USP49 is required for efficient cotranscriptional splicing of a large set of exons. Post-translationally, phosphorylated on Ser-15 (H2BS14ph) by STK4/MST1 during apoptosis; which facilitates apoptotic chromatin condensation. Also phosphorylated on Ser-15 in response to DNA double strand breaks (DSBs), and in correlation with somatic hypermutation and immunoglobulin class-switch recombination. Phosphorylation at Ser-37 (H2BS36ph) by AMPK in response to stress promotes transcription. In terms of processing, glcNAcylation at Ser-113 promotes monoubiquitination of Lys-121. It fluctuates in response to extracellular glucose, and associates with transcribed genes. ADP-ribosylated by PARP1 or PARP2 on Ser-7 (H2BS6ADPr) in response to DNA damage. H2BS6ADPr promotes recruitment of CHD1L. Mono-ADP-ribosylated on Glu-3 (H2BE2ADPr) by PARP3 in response to single-strand breaks. Poly ADP-ribosylation on Glu-36 (H2BE35ADPr) by PARP1 regulates adipogenesis: it inhibits phosphorylation at Ser-37 (H2BS36ph), thereby blocking expression of pro-adipogenetic genes. Post-translationally, crotonylation (Kcr) is specifically present in male germ cells and marks testis-specific genes in post-meiotic cells, including X-linked genes that escape sex chromosome inactivation in haploid cells. Crotonylation marks active promoters and enhancers and confers resistance to transcriptional repressors. It is also associated with post-meiotically activated genes on autosomes. In terms of processing, hydroxybutyrylation of histones is induced by starvation. Lactylated in macrophages by EP300/P300 by using lactoyl-CoA directly derived from endogenous or exogenous lactate, leading to stimulates gene transcription.

The protein localises to the nucleus. It localises to the chromosome. Core component of nucleosome. Nucleosomes wrap and compact DNA into chromatin, limiting DNA accessibility to the cellular machineries which require DNA as a template. Histones thereby play a central role in transcription regulation, DNA repair, DNA replication and chromosomal stability. DNA accessibility is regulated via a complex set of post-translational modifications of histones, also called histone code, and nucleosome remodeling. The polypeptide is Histone H2B type 1-P (Hist1h2bp) (Mus musculus (Mouse)).